Consider the following 506-residue polypeptide: Glycerol kinase (506 aa).

Thr11 provides a ligand contact to ADP. 3 residues coordinate ATP: Thr11, Ser12, and Ser13. A sn-glycerol 3-phosphate-binding site is contributed by Thr11. Arg15 is an ADP binding site. Residues Arg81, Glu82, Tyr133, and Asp242 each coordinate sn-glycerol 3-phosphate. Residues Arg81, Glu82, Tyr133, Asp242, and Gln243 each coordinate glycerol. ADP contacts are provided by Thr264 and Gly316. Thr264, Gly316, Gln320, and Gly421 together coordinate ATP. ADP-binding residues include Gly421 and Asn425.

This sequence belongs to the FGGY kinase family.

The enzyme catalyses glycerol + ATP = sn-glycerol 3-phosphate + ADP + H(+). Its pathway is polyol metabolism; glycerol degradation via glycerol kinase pathway; sn-glycerol 3-phosphate from glycerol: step 1/1. With respect to regulation, inhibited by fructose 1,6-bisphosphate (FBP). Functionally, key enzyme in the regulation of glycerol uptake and metabolism. Catalyzes the phosphorylation of glycerol to yield sn-glycerol 3-phosphate. This chain is Glycerol kinase, found in Paracidovorax citrulli (strain AAC00-1) (Acidovorax citrulli).